A 286-amino-acid polypeptide reads, in one-letter code: Phycobilisome 32.1 kDa linker polypeptide, phycocyanin-associated, rod (286 aa).

The PBS-linker domain occupies 2–180 (AITTAASRLG…LYRGYANSDR (179 aa)). The region spanning 234–286 (DRVYRLEVTGIRSPGYPSVRRSSTVFIVPYERLSDKIQQVHKQGGKIVSVTSA) is the CpcD-like domain.

Belongs to the phycobilisome linker protein family. As to quaternary structure, associated with the phycobilisome, a hemidiscoidal structure that is composed of two distinct substructures: a core complex and a number of rods radiating from the core.

It is found in the cellular thylakoid membrane. Its function is as follows. Rod linker protein, associated with phycocyanin. Linker polypeptides determine the state of aggregation and the location of the disk-shaped phycobiliprotein units within the phycobilisome and modulate their spectroscopic properties in order to mediate a directed and optimal energy transfer. The chain is Phycobilisome 32.1 kDa linker polypeptide, phycocyanin-associated, rod (cpcC) from Nostoc sp. (strain PCC 7120 / SAG 25.82 / UTEX 2576).